The chain runs to 226 residues: Uridylate kinase (226 aa).

Position 9–13 (9–13 (KVSGK)) interacts with ATP. Residue Gly46 participates in UMP binding. The ATP site is built by Gly47 and Arg51. UMP is bound by residues Asp68 and 116-122 (FQPGQST). Positions 142, 148, and 151 each coordinate ATP.

This sequence belongs to the UMP kinase family. Homohexamer.

The protein resides in the cytoplasm. The catalysed reaction is UMP + ATP = UDP + ADP. Its pathway is pyrimidine metabolism; CTP biosynthesis via de novo pathway; UDP from UMP (UMPK route): step 1/1. Inhibited by UTP. Functionally, catalyzes the reversible phosphorylation of UMP to UDP. The chain is Uridylate kinase from Hyperthermus butylicus (strain DSM 5456 / JCM 9403 / PLM1-5).